Consider the following 474-residue polypeptide: C6 finger domain transcription factor aclZ (474 aa).

Positions 42–69 form a DNA-binding region, zn(2)-C6 fungal-type; that stretch reads CNQCHAAKVRCSGERTGCDRCNNLQYQC. Disordered stretches follow at residues 85 to 148 and 177 to 206; these read RGNK…SHSA and MSSD…DSHT. The span at 90–105 shows a compositional bias: polar residues; the sequence is VRTTTEALQRPATAST. The segment covering 117–138 has biased composition (basic and acidic residues); sequence TDQRSENDPLSRSDFGEQDAAH.

The protein resides in the nucleus. Transcription factor that specifically regulates the gene cluster that mediates the biosynthesis of aspirochlorine (or antibiotic A30641), an unusual halogenated spiro compound with distinctive antifungal properties due to selective inhibition of protein biosynthesis, and which is also active against bacteria, viruses, and murine tumor cells. This Aspergillus oryzae (strain ATCC 42149 / RIB 40) (Yellow koji mold) protein is C6 finger domain transcription factor aclZ.